The sequence spans 293 residues: Ribosomal protein L11 methyltransferase (293 aa).

4 residues coordinate S-adenosyl-L-methionine: threonine 145, glycine 166, aspartate 188, and asparagine 230.

Belongs to the methyltransferase superfamily. PrmA family.

The protein localises to the cytoplasm. The enzyme catalyses L-lysyl-[protein] + 3 S-adenosyl-L-methionine = N(6),N(6),N(6)-trimethyl-L-lysyl-[protein] + 3 S-adenosyl-L-homocysteine + 3 H(+). Its function is as follows. Methylates ribosomal protein L11. This Actinobacillus pleuropneumoniae serotype 3 (strain JL03) protein is Ribosomal protein L11 methyltransferase.